Here is a 572-residue protein sequence, read N- to C-terminus: Probable D-xylulose kinase A (572 aa).

The substrate site is built by His-95, Arg-166, Asp-282, and Asn-283. ATP contacts are provided by residues Trp-365, 470-471, and Asn-474; that span reads GG.

The protein belongs to the FGGY kinase family.

The protein resides in the cytoplasm. It carries out the reaction D-xylulose + ATP = D-xylulose 5-phosphate + ADP + H(+). In terms of biological role, highly specific D-xylulose kinase which participates in the catabolism of xylose. Xylose is a major component of hemicelluloses such as xylan. Most fungi utilize D-xylose via three enzymatic reactions, xylose reductase (XR), xylitol dehydrogenase (XDH), and xylulokinase, to form xylulose 5-phosphate, which enters pentose phosphate pathway. The sequence is that of Probable D-xylulose kinase A (xkiA) from Aspergillus flavus (strain ATCC 200026 / FGSC A1120 / IAM 13836 / NRRL 3357 / JCM 12722 / SRRC 167).